The following is a 222-amino-acid chain: Riboflavin kinase (222 aa).

The unknown stretch occupies residues 1 to 92 (MVEAEDLQSL…VRIFNPDQRG (92 aa)). Positions 93–222 (YTLTGTVISG…DTIEVEITHD (130 aa)) are riboflavin kinase. 102–107 (GLGEGR) lines the CDP pocket. Positions 131 and 133 each coordinate Mg(2+). Residues Thr188 and Glu196 each coordinate FMN. 201–204 (CELR) provides a ligand contact to CDP.

Belongs to the archaeal riboflavin kinase family. It depends on Mg(2+) as a cofactor.

The enzyme catalyses riboflavin + CTP = CDP + FMN + H(+). Its pathway is cofactor biosynthesis; FMN biosynthesis; FMN from riboflavin (CTP route): step 1/1. Catalyzes the CTP-dependent phosphorylation of riboflavin (vitamin B2) to form flavin mononucleotide (FMN). The polypeptide is Riboflavin kinase (ribK) (Methanoculleus marisnigri (strain ATCC 35101 / DSM 1498 / JR1)).